A 231-amino-acid polypeptide reads, in one-letter code: L-ribulose-5-phosphate 4-epimerase (231 aa).

Substrate-binding positions include 27-28 (GN), 44-45 (SG), and 74-75 (SS). The Zn(2+) site is built by aspartate 76, histidine 95, and histidine 97. Aspartate 120 serves as the catalytic Proton donor/acceptor. Histidine 171 lines the Zn(2+) pocket. The Proton donor/acceptor role is filled by tyrosine 229.

The protein belongs to the aldolase class II family. AraD/FucA subfamily. Homotetramer. Zn(2+) serves as cofactor.

It catalyses the reaction L-ribulose 5-phosphate = D-xylulose 5-phosphate. The protein operates within carbohydrate degradation; L-arabinose degradation via L-ribulose; D-xylulose 5-phosphate from L-arabinose (bacterial route): step 3/3. Involved in the degradation of L-arabinose. Catalyzes the interconversion of L-ribulose 5-phosphate (LRu5P) and D-xylulose 5-phosphate (D-Xu5P) via a retroaldol/aldol mechanism (carbon-carbon bond cleavage analogous to a class II aldolase reaction). This is L-ribulose-5-phosphate 4-epimerase from Salmonella typhimurium (strain LT2 / SGSC1412 / ATCC 700720).